The following is a 568-amino-acid chain: TWiK family of potassium channels protein 9 (568 aa).

Topologically, residues 1–15 are cytoplasmic; sequence MKCSFHIPEKYQWAS. A helical membrane pass occupies residues 16–36; that stretch reads TLFVHVALIAGVAVYTVFGAL. The pore-forming intramembrane region spans 163 to 183; that stretch reads IGNSVIFAFTVITTIGYGHVA. The chain crosses the membrane as a helical span at residues 191–211; it reads LFLIFYGVIGVPFTLLTIADL. Over 212-316 the chain is Cytoplasmic; it reads GMFLTRFLKN…NNEPRKTEES (105 aa). Disordered stretches follow at residues 243–262 and 274–314; these read QRNKSQKTSPVMPDSERSEV and MRTA…RKTE. The segment covering 297 to 307 has biased composition (acidic residues); sequence GKEEDEEEPEN. Residues 317–337 traverse the membrane as a helical segment; sequence IALGITFTCYLVAGAKILSVY. Positions 343–363 form an intramembrane region, pore-forming; that stretch reads FFKALYFNFVTLTTIGLGDFV. A helical membrane pass occupies residues 370–390; sequence LLITLIYIGIGLALTTMAIEI. At 391–568 the chain is on the cytoplasmic side; it reads AADLLKKLHY…LRTYTNARRK (178 aa).

The protein belongs to the two pore domain potassium channel (TC 1.A.1.8) family. Expressed in ray A-type neurons and cell bodies. Also seen in head, pharyngeal and phasmid neurons, and in coelomocytes.

Its subcellular location is the membrane. Potassium channel protein that may be component of regulatory network that controls ray development and function. The protein is TWiK family of potassium channels protein 9 (twk-9) of Caenorhabditis elegans.